The following is a 429-amino-acid chain: Fumarylacetoacetase (429 aa).

Residue D139 participates in Ca(2+) binding. The Proton acceptor role is filled by H146. R155 lines the substrate pocket. Residues E212, E214, and D246 each coordinate Ca(2+). D246 is a binding site for Mg(2+). A substrate-binding site is contributed by Q253. 2 residues coordinate Mg(2+): K266 and T270. Substrate is bound at residue T363.

Belongs to the FAH family. The cofactor is Ca(2+). Mg(2+) serves as cofactor.

It catalyses the reaction 4-fumarylacetoacetate + H2O = acetoacetate + fumarate + H(+). The protein operates within amino-acid degradation; L-phenylalanine degradation; acetoacetate and fumarate from L-phenylalanine: step 6/6. Functionally, converts fumarylacetoacetate to acetoacetate and fumarate. Involved in tyrosine catabolic pathway. Catalyzes the final step in the tyrosine degradation pathway. The protein is Fumarylacetoacetase of Oryza sativa subsp. japonica (Rice).